The sequence spans 237 residues: Ribonuclease 3 (237 aa).

Positions 6-133 (LIEVEKLIGI…VIAAVYLDKG (128 aa)) constitute an RNase III domain. E46 contributes to the Mg(2+) binding site. D50 is an active-site residue. Residues D119 and E122 each contribute to the Mg(2+) site. The active site involves E122. In terms of domain architecture, DRBM spans 160–229 (DFKTRLQEVL…AKAALQRLGE (70 aa)).

Belongs to the ribonuclease III family. Homodimer. The cofactor is Mg(2+).

Its subcellular location is the cytoplasm. The enzyme catalyses Endonucleolytic cleavage to 5'-phosphomonoester.. Digests double-stranded RNA. Involved in the processing of primary rRNA transcript to yield the immediate precursors to the large and small rRNAs (23S and 16S). Processes some mRNAs, and tRNAs when they are encoded in the rRNA operon. Processes pre-crRNA and tracrRNA of type II CRISPR loci if present in the organism. The polypeptide is Ribonuclease 3 (Clostridium perfringens (strain 13 / Type A)).